A 103-amino-acid polypeptide reads, in one-letter code: Cysteine-rich and transmembrane domain-containing protein 1 (103 aa).

Pro residues predominate over residues 1 to 45 (MNQGNPPPYPGPGPTAPYPPYPSQPMGPGFYPPGPPGGPYPPPQG). The disordered stretch occupies residues 1-66 (MNQGNPPPYP…WQGGPQEPPK (66 aa)). Positions 46-56 (GYPYQGYPQYG) are enriched in low complexity. The chain crosses the membrane as a helical span at residues 80-97 (LGTSTCLTACWTALCCCC).

The protein belongs to the CYSTM1 family.

It localises to the membrane. This is Cysteine-rich and transmembrane domain-containing protein 1 (CYSTM1) from Bos taurus (Bovine).